The primary structure comprises 291 residues: MSASTQQEPSLILITGMSGAGRRATAAALEELGWYVADNLPPELIVRMVELSFSDDSPIEKLAIVTDVRSRDFAGNLTSVLHDLHTGGRRPTVLYLDATDEALIARFDAVRRTHPLQQKGTLQDGIDREREMLTSIRERADIVLDTTNRSIHDLRRELEKFFAAADHSSVRINVQSFGFKHGPPKDIDMLLDARFLPNPYWDPELRPFKGIDAPVSDFVLSQPGAQAFLDHIVGLIHSVLPGYRKEGKFFVSVAIGCTGGHHRSVAIVEELTRRLADDGVLVNLSHRDLER.

Residue 16-23 (GMSGAGRR) coordinates ATP. 67–70 (DVRS) lines the GTP pocket.

It belongs to the RapZ-like family.

In terms of biological role, displays ATPase and GTPase activities. This chain is Nucleotide-binding protein jk1004, found in Corynebacterium jeikeium (strain K411).